Reading from the N-terminus, the 412-residue chain is Subtilisin-like protease 6 (412 aa).

An N-terminal signal peptide occupies residues 1 to 20 (MGFITKAIPIVLAALSTVNG). The propeptide occupies 21 to 127 (ARILEAGPHA…VRATTNGTNL (107 aa)). In terms of domain architecture, Inhibitor I9 spans 36 to 120 (KYIVVMKKDV…FIEPDFVVRA (85 aa)). The Peptidase S8 domain occupies 135–412 (SWGLARVSTR…SKLIYNGSGK (278 aa)). Residues aspartate 167 and histidine 198 each act as charge relay system in the active site. N-linked (GlcNAc...) asparagine glycosylation is found at asparagine 252, asparagine 264, and asparagine 325. Serine 358 (charge relay system) is an active-site residue. Asparagine 408 carries an N-linked (GlcNAc...) asparagine glycan.

This sequence belongs to the peptidase S8 family.

Its subcellular location is the secreted. In terms of biological role, secreted subtilisin-like serine protease with keratinolytic activity that contributes to pathogenicity. The protein is Subtilisin-like protease 6 (SUB6) of Trichophyton verrucosum (strain HKI 0517).